Here is a 59-residue protein sequence, read N- to C-terminus: Large ribosomal subunit protein bL32 (59 aa).

A compositionally biased stretch (basic residues) spans M1–Q19. Residues M1–W20 are disordered.

The protein belongs to the bacterial ribosomal protein bL32 family.

The protein is Large ribosomal subunit protein bL32 of Acidothermus cellulolyticus (strain ATCC 43068 / DSM 8971 / 11B).